The chain runs to 79 residues: Acyl carrier protein (79 aa).

The region spanning 2–77 (SEIGERVKKI…DAVKFLEKNA (76 aa)) is the Carrier domain. S37 is subject to O-(pantetheine 4'-phosphoryl)serine.

Belongs to the acyl carrier protein (ACP) family. 4'-phosphopantetheine is transferred from CoA to a specific serine of apo-ACP by AcpS. This modification is essential for activity because fatty acids are bound in thioester linkage to the sulfhydryl of the prosthetic group.

It is found in the cytoplasm. It participates in lipid metabolism; fatty acid biosynthesis. Its function is as follows. Carrier of the growing fatty acid chain in fatty acid biosynthesis. The polypeptide is Acyl carrier protein (Rhodopseudomonas palustris (strain BisA53)).